A 324-amino-acid chain; its full sequence is D-alanine--D-alanine ligase (324 aa).

An ATP-grasp domain is found at 121-321; sequence NQYLKAFGVR…IKDVMTDIIE (201 aa). 149 to 204 is a binding site for ATP; the sequence is VEKIGLPCFIKPNLGGSSFGVTKVKTREQIQPAIAKAFSEAEEVMIEAFMGGTELT. Asp-275, Glu-288, and Asn-290 together coordinate Mg(2+).

This sequence belongs to the D-alanine--D-alanine ligase family. It depends on Mg(2+) as a cofactor. Requires Mn(2+) as cofactor.

The protein resides in the cytoplasm. The catalysed reaction is 2 D-alanine + ATP = D-alanyl-D-alanine + ADP + phosphate + H(+). It functions in the pathway cell wall biogenesis; peptidoglycan biosynthesis. Cell wall formation. The polypeptide is D-alanine--D-alanine ligase (Bacteroides fragilis (strain ATCC 25285 / DSM 2151 / CCUG 4856 / JCM 11019 / LMG 10263 / NCTC 9343 / Onslow / VPI 2553 / EN-2)).